Consider the following 547-residue polypeptide: Alpha-1,3-mannosyl-glycoprotein 4-beta-N-acetylglucosaminyltransferase B (547 aa).

Over 1 to 7 (MRLRNGT) the chain is Cytoplasmic. Residues 8 to 28 (FLTVLLFGLCGLISLSWYTAF) form a helical; Signal-anchor for type II membrane protein membrane-spanning segment. Residues 29 to 547 (SNSKGNVVDI…LSEIFIKKAE (519 aa)) lie on the Lumenal side of the membrane. Positions 36-83 (VDIYQREFLALRDRLHSAEQENLKRSKELNLVLDEIKRAIAEKQALRD) form a coiled coil. N-linked (GlcNAc...) asparagine glycans are attached at residues asparagine 85, asparagine 101, and asparagine 464.

The protein belongs to the glycosyltransferase 54 family. A divalent metal cation is required as a cofactor. In terms of processing, N-glycosylated.

The protein localises to the golgi apparatus membrane. The enzyme catalyses N(4)-{beta-D-GlcNAc-(1-&gt;2)-alpha-D-Man-(1-&gt;3)-[beta-D-GlcNAc-(1-&gt;2)-alpha-D-Man-(1-&gt;6)]-beta-D-Man-(1-&gt;4)-beta-D-GlcNAc-(1-&gt;4)-beta-D-GlcNAc}-L-asparaginyl-[protein] + UDP-N-acetyl-alpha-D-glucosamine = N(4)-{beta-D-GlcNAc-(1-&gt;2)-[beta-D-GlcNAc-(1-&gt;4)]-alpha-D-Man-(1-&gt;3)-[beta-D-GlcNAc-(1-&gt;2)-alpha-D-Man-(1-&gt;6)]-beta-D-Man-(1-&gt;4)-beta-D-GlcNAc-(1-&gt;4)-beta-D-GlcNAc}-L-asparaginyl-[protein] + UDP + H(+). It carries out the reaction an N(4)-{beta-D-GlcNAc-(1-&gt;2)-alpha-D-Man-(1-&gt;3)-[alpha-D-Man-(1-&gt;6)]-beta-D-Man-(1-&gt;4)-beta-D-GlcNAc-(1-&gt;4)-beta-D-GlcNAc}-L-asparaginyl-[protein] + UDP-N-acetyl-alpha-D-glucosamine = an N(4)-{beta-D-GlcNAc-(1-&gt;2)-[beta-D-GlcNAc-(1-&gt;4)]-alpha-D-Man-(1-&gt;3)-[alpha-D-Man-(1-&gt;6)]-beta-D-Man-(1-&gt;4)-beta-D-GlcNAc-(1-&gt;4)-beta-D-GlcNAc}-L-asparaginyl-[protein] + UDP + H(+). The catalysed reaction is an N(4)-{beta-D-GlcNAc-(1-&gt;2)-alpha-D-Man-(1-&gt;3)-[beta-D-GlcNAc-(1-&gt;2)-[beta-D-GlcNAc-(1-&gt;6)]-alpha-D-Man-(1-&gt;6)]-beta-D-Man-(1-&gt;4)-beta-D-GlcNAc-(1-&gt;4)-beta-D-GlcNAc}-L-asparaginyl-[protein] + UDP-N-acetyl-alpha-D-glucosamine = an N(4)-{beta-D-GlcNAc-(1-&gt;2)-[beta-D-GlcNAc-(1-&gt;4)]-alpha-D-Man-(1-&gt;3)-[beta-D-GlcNAc-(1-&gt;2)-[beta-D-GlcNAc-(1-&gt;6)]-alpha-D-Man-(1-&gt;6)]-beta-D-Man-(1-&gt;4)-beta-D-GlcNAc-(1-&gt;4)-beta-D-GlcNAc}-L-asparaginyl-[protein] + UDP + H(+). It catalyses the reaction an N(4)-{beta-D-GlcNAc-(1-&gt;2)-alpha-D-Man-(1-&gt;3)-[beta-D-GlcNAc-(1-&gt;2)-alpha-D-Man-(1-&gt;6)]-beta-D-Man-(1-&gt;4)-beta-D-GlcNAc-(1-&gt;4)-[alpha-L-Fuc-(1-&gt;6)]-beta-D-GlcNAc}-L-asparaginyl-[protein] + UDP-N-acetyl-alpha-D-glucosamine = N(4)-{beta-D-GlcNAc-(1-&gt;2)-[beta-D-GlcNAc-(1-&gt;4)]-alpha-D-Man-(1-&gt;3)-[beta-D-GlcNAc-(1-&gt;2)-alpha-D-Man-(1-&gt;6)]-beta-D-Man-(1-&gt;4)-beta-D-GlcNAc-(1-&gt;4)-[alpha-L-Fuc-(1-&gt;6)]-beta-D-GlcNAc}-asparaginyl-[protein] + UDP + H(+). The enzyme catalyses an N(4)-{beta-D-GlcNAc-(1-&gt;2)-alpha-D-Man-(1-&gt;3)-[beta-D-Gal-(1-&gt;4)-beta-D-GlcNAc-(1-&gt;2)-alpha-D-Man-(1-&gt;6)]-beta-D-Man-(1-&gt;4)-beta-D-GlcNAc-(1-&gt;4)-beta-D-GlcNAc}-L-asparaginyl-[protein] + UDP-N-acetyl-alpha-D-glucosamine = an N(4)-{beta-D-GlcNAc-(1-&gt;2)-[beta-D-GlcNAc-(1-&gt;4)]-alpha-D-Man-(1-&gt;3)-[beta-D-Gal-(1-&gt;4)-beta-D-GlcNAc-(1-&gt;2)-alpha-D-Man-(1-&gt;6)]-beta-D-Man-(1-&gt;4)-beta-D-GlcNAc-(1-&gt;4)-beta-D-GlcNAc}-L-asparaginyl-[protein] + UDP + H(+). It carries out the reaction N(4)-{beta-D-GlcNAc-(1-&gt;2)-alpha-D-Man-(1-&gt;3)-[alpha-D-Man-(1-&gt;3)-{alpha-D-Man-(1-&gt;6)}-alpha-D-Man-(1-&gt;6)]-beta-D-Man-(1-&gt;4)-beta-D-GlcNAc-(1-&gt;4)-beta-D-GlcNAc}-asparaginyl-[protein] + UDP-N-acetyl-alpha-D-glucosamine = N(4)-{beta-D-GlcNAc-(1-&gt;2)-[beta-D-GlcNAc-(1-&gt;4)]-alpha-D-Man-(1-&gt;3)-[alpha-D-Man-(1-&gt;3)-{alpha-D-Man-(1-&gt;6)}-alpha-D-Man-(1-&gt;6)]-beta-D-Man-(1-&gt;4)-beta-D-GlcNAc-(1-&gt;4)-beta-D-GlcNAc}-asparaginyl-[protein] + UDP + H(+). The catalysed reaction is N(4)-{beta-D-GlcNAc-(1-&gt;2)-alpha-D-Man-(1-&gt;3)-beta-D-Man-(1-&gt;4)-beta-D-GlcNAc-(1-&gt;4)-beta-D-GlcNAc}-asparaginyl-[protein] + UDP-N-acetyl-alpha-D-glucosamine = N(4)-{beta-D-GlcNAc-(1-&gt;2)-[beta-D-GlcNAc-(1-&gt;4)]-alpha-D-Man-(1-&gt;3)-beta-D-Man-(1-&gt;4)-beta-D-GlcNAc-(1-&gt;4)-beta-D-GlcNAc}-asparaginyl-[protein] + UDP + H(+). It functions in the pathway protein modification; protein glycosylation. In terms of biological role, glycosyltransferase that catalyze the transfer of GlcNAc from UDP-GlcNAc to the GlcNAcbeta1-2Manalpha1-3 arm of the core structure of N-linked glycans through a beta1-4 linkage and participates in the production of tri- and tetra-antennary N-linked sugar chains. Prefers complex-type N-glycans over hybrid-types. Has lower affinities for donors or acceptors than MGAT4A, suggesting that, under physiological conditions, it is not the main contributor in N-glycan biosynthesis. The sequence is that of Alpha-1,3-mannosyl-glycoprotein 4-beta-N-acetylglucosaminyltransferase B (mgat4bQ9UQ53) from Danio rerio (Zebrafish).